A 288-amino-acid chain; its full sequence is Undecaprenyl-diphosphatase (288 aa).

Transmembrane regions (helical) follow at residues 25–45 (GITE…NEFL), 53–73 (FIDM…MVIY), 93–113 (WKLW…GLLL), 121–141 (LSNF…FIWI), 171–191 (VLSI…GIIV), 196–216 (SVAA…YSGL), 231–251 (GQAA…LFVI), and 263–283 (FTVF…YGAV).

It belongs to the UppP family.

The protein localises to the cell membrane. It carries out the reaction di-trans,octa-cis-undecaprenyl diphosphate + H2O = di-trans,octa-cis-undecaprenyl phosphate + phosphate + H(+). In terms of biological role, catalyzes the dephosphorylation of undecaprenyl diphosphate (UPP). Confers resistance to bacitracin. In Streptococcus thermophilus (strain ATCC BAA-250 / LMG 18311), this protein is Undecaprenyl-diphosphatase.